A 358-amino-acid chain; its full sequence is Sulfoquinovosyl glycerol transport ATP-binding protein SmoE (358 aa).

One can recognise an ABC transporter domain in the interval 4 to 234 (VSLRKLDKSY…PESVFVGGFV (231 aa)). Position 36–43 (36–43 (GPSGCGKS)) interacts with ATP.

Belongs to the ABC transporter superfamily. The complex is probably composed of two ATP-binding proteins (SmoE), two transmembrane proteins (SmoG and SmoH) and a solute-binding protein (SmoF).

It localises to the cell inner membrane. Part of the ABC transporter complex SmoEFGH involved in sulfoquinovosyl glycerol (SQGro) uptake. Responsible for energy coupling to the transport system. The polypeptide is Sulfoquinovosyl glycerol transport ATP-binding protein SmoE (Agrobacterium fabrum (strain C58 / ATCC 33970) (Agrobacterium tumefaciens (strain C58))).